The primary structure comprises 426 residues: Divalent metal cation transporter MntH (426 aa).

Transmembrane regions (helical) follow at residues 31–51 (WYLL…GNVA), 58–78 (AQFG…AGLV), 134–156 (ILFR…LLLM), 169–189 (VITG…FVAT), 208–228 (SVLL…VYLH), 256–276 (VILA…VAAI), 298–318 (LGAT…LASA), 337–357 (IPML…LALG), 363–383 (ALVL…LPLV), and 402–422 (TVLG…LIYL).

This sequence belongs to the NRAMP family.

It is found in the cell membrane. H(+)-stimulated, divalent metal cation uptake system. The polypeptide is Divalent metal cation transporter MntH (Mycobacterium leprae (strain TN)).